Reading from the N-terminus, the 46-residue chain is U-limacoditoxin(6)-Dv61 (46 aa).

The first 19 residues, 1 to 19 (MSKLLVLLMTTALATLAQA), serve as a signal peptide directing secretion.

Belongs to the limacoditoxin-6 family. In terms of tissue distribution, expressed by the venom secretory cell of the spine. The spine is a cuticular structure containing a single large nucleated venom-secreting cell at its base. It is an independent unit capable of producing, storing and injecting venom. On the back of D.vulnerans caterpillars, spines are grouped together by 50 to 100 to form scoli, of which there are eight in D.vulnerans.

The protein localises to the secreted. Functionally, probable toxin. Does not show insecticidal, antimicrobial and antiparasitic activities. Does not induce increase in intracellular calcium in mouse DRG neurons, suggesting that it does not induce pain. The polypeptide is U-limacoditoxin(6)-Dv61 (Doratifera vulnerans (Mottled cup moth)).